Here is a 179-residue protein sequence, read N- to C-terminus: ATP synthase subunit delta (179 aa).

It belongs to the ATPase delta chain family. In terms of assembly, F-type ATPases have 2 components, F(1) - the catalytic core - and F(0) - the membrane proton channel. F(1) has five subunits: alpha(3), beta(3), gamma(1), delta(1), epsilon(1). F(0) has three main subunits: a(1), b(2) and c(10-14). The alpha and beta chains form an alternating ring which encloses part of the gamma chain. F(1) is attached to F(0) by a central stalk formed by the gamma and epsilon chains, while a peripheral stalk is formed by the delta and b chains.

The protein localises to the cell inner membrane. F(1)F(0) ATP synthase produces ATP from ADP in the presence of a proton or sodium gradient. F-type ATPases consist of two structural domains, F(1) containing the extramembraneous catalytic core and F(0) containing the membrane proton channel, linked together by a central stalk and a peripheral stalk. During catalysis, ATP synthesis in the catalytic domain of F(1) is coupled via a rotary mechanism of the central stalk subunits to proton translocation. Functionally, this protein is part of the stalk that links CF(0) to CF(1). It either transmits conformational changes from CF(0) to CF(1) or is implicated in proton conduction. In Acidithiobacillus ferridurans, this protein is ATP synthase subunit delta.